Reading from the N-terminus, the 171-residue chain is MFVVKMVLGFLILLSPLCATGLDISQTDIIERSLNFLLFVGILWYFSAKKLRSFLRSKSLEISKRLEEIQAQLKVSKENKKKLLKELEQAKEKAELIVSDANKEAYMITQKYELQTKMDVENLIKNSKALMDLEVKKIKRELVESVFKDLRESKKVSFNAQDCVNILKQRL.

Residues 2 to 22 (FVVKMVLGFLILLSPLCATGL) form a helical membrane-spanning segment.

Belongs to the ATPase B chain family. As to quaternary structure, F-type ATPases have 2 components, F(1) - the catalytic core - and F(0) - the membrane proton channel. F(1) has five subunits: alpha(3), beta(3), gamma(1), delta(1), epsilon(1). F(0) has three main subunits: a(1), b(2) and c(10-14). The alpha and beta chains form an alternating ring which encloses part of the gamma chain. F(1) is attached to F(0) by a central stalk formed by the gamma and epsilon chains, while a peripheral stalk is formed by the delta and b chains.

It localises to the cell inner membrane. In terms of biological role, f(1)F(0) ATP synthase produces ATP from ADP in the presence of a proton or sodium gradient. F-type ATPases consist of two structural domains, F(1) containing the extramembraneous catalytic core and F(0) containing the membrane proton channel, linked together by a central stalk and a peripheral stalk. During catalysis, ATP synthesis in the catalytic domain of F(1) is coupled via a rotary mechanism of the central stalk subunits to proton translocation. Component of the F(0) channel, it forms part of the peripheral stalk, linking F(1) to F(0). This is ATP synthase subunit b from Helicobacter pylori (strain ATCC 700392 / 26695) (Campylobacter pylori).